We begin with the raw amino-acid sequence, 599 residues long: MTSENPLDPNNAYAAADDAPLSEGDPTGAPADSGSDTLTAIQAARVAVKTLLDGGVRYVVVSPGSRSAPMAYALAEADAAGRVELLVRIDERSAGFTALGLALSTGAPVAVLTTSGTAVGNLLPAVMEANHAAVPLVVLSADRPDELRGTGANQTTDQLDLFGEHVRFAVDVPAGTNPQRAVETALSAATGVFEDTPPGPVQLNLAFRDPLVPPPADHLPEATGRRTWQIGRGPEPLTLAPAPATLAERRTVVLAGHDAGPVAEAFARAHGLPLLAEPSSNSRFGPNAVGPYRLLLEHFGPDSAQPIERVVLFGRPTLSRPVSALLARADVPSALYQPLPVAWYEPGRRTELPLDNLSDLADFSGRGSSGWLDAWLLAGAAAQHALDQALSEEPAATGPTVGALVWKHARGQLMLGSSNGIRDVDLAGQPAPEPHATIFANRGLAGIDGTISTATGIAWGGRQETTLLLGDVTFLHDAGGLLLGFAENDPLLRIVVLNDAGGAIFNLLEHGAVQESGTYGNAVERLFGTPHKVDISSLAAAYGVEHCAVSTTAELAKALAAPSSGRSIIEVRTDRAGLRKLHGRIKAAVGEAARSVLAG.

Low complexity predominate over residues 1 to 21; the sequence is MTSENPLDPNNAYAAADDAPL. The tract at residues 1–35 is disordered; the sequence is MTSENPLDPNNAYAAADDAPLSEGDPTGAPADSGS.

The protein belongs to the TPP enzyme family. MenD subfamily. In terms of assembly, homodimer. Mg(2+) is required as a cofactor. The cofactor is Mn(2+). Thiamine diphosphate serves as cofactor.

The enzyme catalyses isochorismate + 2-oxoglutarate + H(+) = 5-enolpyruvoyl-6-hydroxy-2-succinyl-cyclohex-3-ene-1-carboxylate + CO2. It participates in quinol/quinone metabolism; 1,4-dihydroxy-2-naphthoate biosynthesis; 1,4-dihydroxy-2-naphthoate from chorismate: step 2/7. The protein operates within quinol/quinone metabolism; menaquinone biosynthesis. Its function is as follows. Catalyzes the thiamine diphosphate-dependent decarboxylation of 2-oxoglutarate and the subsequent addition of the resulting succinic semialdehyde-thiamine pyrophosphate anion to isochorismate to yield 2-succinyl-5-enolpyruvyl-6-hydroxy-3-cyclohexene-1-carboxylate (SEPHCHC). In Arthrobacter sp. (strain FB24), this protein is 2-succinyl-5-enolpyruvyl-6-hydroxy-3-cyclohexene-1-carboxylate synthase.